We begin with the raw amino-acid sequence, 387 residues long: Xylose isomerase (387 aa).

Catalysis depends on residues histidine 53 and aspartate 56. The Mg(2+) site is built by glutamate 180, glutamate 216, histidine 219, aspartate 244, aspartate 254, aspartate 256, and aspartate 286.

This sequence belongs to the xylose isomerase family. In terms of assembly, homotetramer. It depends on Mg(2+) as a cofactor.

It is found in the cytoplasm. The enzyme catalyses alpha-D-xylose = alpha-D-xylulofuranose. This is Xylose isomerase (xylA) from Thermus caldophilus.